A 25-amino-acid polypeptide reads, in one-letter code: Caerin-1.7 (25 aa).

Leu-25 carries the leucine amide modification.

Belongs to the frog skin active peptide (FSAP) family. Caerin subfamily. Post-translationally, caerin-1.7.1 does not have any antibacterial activity. Expressed by the skin dorsal glands.

The protein resides in the secreted. In terms of biological role, antibacterial peptide, that adopts an alpha helical conformation which can disrupt bacterial membranes. Each caerin displays a different antimicrobial specificity. The sequence is that of Caerin-1.7 from Ranoidea xanthomera (Northern orange-eyed tree frog).